The following is an 811-amino-acid chain: Lon protease 1 (811 aa).

The region spanning Leu15–Ile212 is the Lon N-terminal domain. ATP is bound at residue Gly376 to Thr383. Positions Tyr613 to Leu794 constitute a Lon proteolytic domain. Residues Ser700 and Lys743 contribute to the active site.

Belongs to the peptidase S16 family. In terms of assembly, homohexamer. Organized in a ring with a central cavity.

The protein resides in the cytoplasm. The enzyme catalyses Hydrolysis of proteins in presence of ATP.. ATP-dependent serine protease that mediates the selective degradation of mutant and abnormal proteins as well as certain short-lived regulatory proteins. Required for cellular homeostasis and for survival from DNA damage and developmental changes induced by stress. Degrades polypeptides processively to yield small peptide fragments that are 5 to 10 amino acids long. Binds to DNA in a double-stranded, site-specific manner. This is Lon protease 1 from Sorangium cellulosum (strain So ce56) (Polyangium cellulosum (strain So ce56)).